A 159-amino-acid polypeptide reads, in one-letter code: Phosphopantetheine adenylyltransferase (159 aa).

Threonine 10 is a binding site for substrate. ATP contacts are provided by residues 10 to 11 (TF) and histidine 18. Residues lysine 42, methionine 74, and arginine 88 each contribute to the substrate site. ATP-binding positions include 89–91 (GLR), glutamate 99, and 124–130 (WSFISSS).

This sequence belongs to the bacterial CoaD family. Homohexamer. Mg(2+) is required as a cofactor.

It is found in the cytoplasm. The enzyme catalyses (R)-4'-phosphopantetheine + ATP + H(+) = 3'-dephospho-CoA + diphosphate. The protein operates within cofactor biosynthesis; coenzyme A biosynthesis; CoA from (R)-pantothenate: step 4/5. Reversibly transfers an adenylyl group from ATP to 4'-phosphopantetheine, yielding dephospho-CoA (dPCoA) and pyrophosphate. This is Phosphopantetheine adenylyltransferase from Salmonella dublin (strain CT_02021853).